Here is a 395-residue protein sequence, read N- to C-terminus: Elongation factor Tu (395 aa).

One can recognise a tr-type G domain in the interval Lys10–Gln204. Positions Gly19–Thr26 are G1. Residue Gly19–Thr26 participates in GTP binding. Position 26 (Thr26) interacts with Mg(2+). The segment at Gly61–Ser65 is G2. The interval Asp82–Gly85 is G3. Residues Asp82–His86 and Asn137–Asp140 each bind GTP. Positions Asn137 to Asp140 are G4. The segment at Ser173–Leu175 is G5.

This sequence belongs to the TRAFAC class translation factor GTPase superfamily. Classic translation factor GTPase family. EF-Tu/EF-1A subfamily. As to quaternary structure, monomer.

It localises to the cytoplasm. The enzyme catalyses GTP + H2O = GDP + phosphate + H(+). In terms of biological role, GTP hydrolase that promotes the GTP-dependent binding of aminoacyl-tRNA to the A-site of ribosomes during protein biosynthesis. This Agathobacter rectalis (strain ATCC 33656 / DSM 3377 / JCM 17463 / KCTC 5835 / VPI 0990) (Eubacterium rectale) protein is Elongation factor Tu.